The primary structure comprises 399 residues: Telomeric repeat-binding factor 2-interacting protein 1 (399 aa).

Position 2 is an N-acetylalanine (Ala-2). Phosphoserine is present on residues Ser-36 and Ser-43. The 24-residue stretch at 78 to 101 (FISTQYILDCVERNERLELEAYRL) folds into the BRCT domain. The interval 104 to 132 (ASAADTGSEAKPGALAEGAAEPEPQRHAG) is disordered. Over residues 112–125 (EAKPGALAEGAAEP) the composition is skewed to low complexity. A Glycyl lysine isopeptide (Lys-Gly) (interchain with G-Cter in SUMO2) cross-link involves residue Lys-114. A Myb-like domain is found at 128–188 (QRHAGRIAFT…SLKDRYLKHL (61 aa)). Residues Ser-154 and Ser-156 each carry the phosphoserine modification. Lys-194 participates in a covalent cross-link: Glycyl lysine isopeptide (Lys-Gly) (interchain with G-Cter in SUMO2). Disordered stretches follow at residues 196–244 (LLGD…EEIQ) and 264–311 (VVVD…QPEV). Residues Ser-203 and Ser-206 each carry the phosphoserine modification. Glycyl lysine isopeptide (Lys-Gly) (interchain with G-Cter in SUMO2) cross-links involve residues Lys-208, Lys-212, and Lys-240. The span at 280–304 (CDDDPPTPEEDSETQPDEEEEEEEE) shows a compositional bias: acidic residues. A Glycyl lysine isopeptide (Lys-Gly) (interchain with G-Cter in SUMO2) cross-link involves residue Lys-372. Residues 383 to 399 (KKFGAQNVARRIEFRKK) carry the Nuclear localization signal motif.

Belongs to the RAP1 family. As to quaternary structure, associates with the I-kappa-B-kinase (IKK) core complex, composed of CHUK, IKBKB and IKBKG. Homodimer. Component of the shelterin complex (telosome) composed of TERF1, TERF2, TINF2, TERF2IP ACD and POT1. Interacts with TERF2; the interaction is direct. Does not interact with TERF1. Interacts with SLX4/BTBD12. In terms of tissue distribution, ubiquitous. Highly expressed.

It is found in the nucleus. The protein localises to the cytoplasm. Its subcellular location is the chromosome. It localises to the telomere. Its function is as follows. Acts both as a regulator of telomere function and as a transcription regulator. Involved in the regulation of telomere length and protection as a component of the shelterin complex (telosome). In contrast to other components of the shelterin complex, it is dispensible for telomere capping and does not participate in the protection of telomeres against non-homologous end-joining (NHEJ)-mediated repair. Instead, it is required to negatively regulate telomere recombination and is essential for repressing homology-directed repair (HDR), which can affect telomere length. Does not bind DNA directly: recruited to telomeric double-stranded 5'-TTAGGG-3' repeats via its interaction with TERF2. Independently of its function in telomeres, also acts as a transcription regulator: recruited to extratelomeric 5'-TTAGGG-3' sites via its association with TERF2 or other factors, and regulates gene expression. When cytoplasmic, associates with the I-kappa-B-kinase (IKK) complex and acts as a regulator of the NF-kappa-B signaling by promoting IKK-mediated phosphorylation of RELA/p65, leading to activate expression of NF-kappa-B target genes. This is Telomeric repeat-binding factor 2-interacting protein 1 (TERF2IP) from Homo sapiens (Human).